Reading from the N-terminus, the 410-residue chain is LL-diaminopimelate aminotransferase (410 aa).

Substrate is bound by residues Y15 and G42. Pyridoxal 5'-phosphate contacts are provided by residues Y72, 108–109, Y132, N187, Y218, and 246–248; these read AK and SFS. The substrate site is built by K109, Y132, and N187. Position 249 is an N6-(pyridoxal phosphate)lysine (K249). Positions 257 and 292 each coordinate pyridoxal 5'-phosphate. Substrate-binding residues include N292 and R388.

Belongs to the class-I pyridoxal-phosphate-dependent aminotransferase family. LL-diaminopimelate aminotransferase subfamily. Homodimer. Pyridoxal 5'-phosphate serves as cofactor.

It carries out the reaction (2S,6S)-2,6-diaminopimelate + 2-oxoglutarate = (S)-2,3,4,5-tetrahydrodipicolinate + L-glutamate + H2O + H(+). It participates in amino-acid biosynthesis; L-lysine biosynthesis via DAP pathway; LL-2,6-diaminopimelate from (S)-tetrahydrodipicolinate (aminotransferase route): step 1/1. Functionally, involved in the synthesis of meso-diaminopimelate (m-DAP or DL-DAP), required for both lysine and peptidoglycan biosynthesis. Catalyzes the direct conversion of tetrahydrodipicolinate to LL-diaminopimelate. This chain is LL-diaminopimelate aminotransferase, found in Picosynechococcus sp. (strain ATCC 27264 / PCC 7002 / PR-6) (Agmenellum quadruplicatum).